The sequence spans 235 residues: Matrix protein (235 aa).

This sequence belongs to the nucleorhabdovirus type-2 matrix protein family. In terms of assembly, homomultimer. Interacts with nucleoprotein and with the cytoplasmic domain of glycoprotein.

Its subcellular location is the virion membrane. It is found in the host endomembrane system. Plays a major role in assembly and budding of virion. Completely covers the ribonucleoprotein coil and keep it in condensed bullet-shaped form. Inhibits viral transcription and stimulates replication. This is Matrix protein (M) from Colocasia esculenta (Wild taro).